The sequence spans 117 residues: Large ribosomal subunit protein uL18 (117 aa).

It belongs to the universal ribosomal protein uL18 family. Part of the 50S ribosomal subunit; part of the 5S rRNA/L5/L18/L25 subcomplex. Contacts the 5S and 23S rRNAs.

This is one of the proteins that bind and probably mediate the attachment of the 5S RNA into the large ribosomal subunit, where it forms part of the central protuberance. This Sphingopyxis alaskensis (strain DSM 13593 / LMG 18877 / RB2256) (Sphingomonas alaskensis) protein is Large ribosomal subunit protein uL18.